The primary structure comprises 238 residues: Survival of motor neuron-related-splicing factor 30 (238 aa).

The region spanning 72-132 (SWKVGDKCMA…KPVEEGRKAK (61 aa)) is the Tudor domain. Positions 142 to 160 (KKEMIAQQREYKKKKALKK) match the Nuclear localization signal motif. At serine 201 the chain carries Phosphoserine. Lysine 219 is modified (N6-acetyllysine).

The protein belongs to the SMN family. In terms of assembly, associates with spliceosomes. Associates with U4/U5/U6 tri-snRNP and with U2 snRNP.

The protein localises to the nucleus speckle. It localises to the nucleus. The protein resides in the cajal body. Involved in spliceosome assembly. The sequence is that of Survival of motor neuron-related-splicing factor 30 (Smndc1) from Mus musculus (Mouse).